Reading from the N-terminus, the 193-residue chain is Interferon lambda-2 (193 aa).

Positions 1-19 (MLLLLLPLLLAAVLTRTQA) are cleaved as a signal peptide. A glycan (N-linked (GlcNAc...) asparagine) is linked at Asn105.

The protein belongs to the lambda interferon family.

The protein resides in the secreted. Functionally, cytokine with antiviral, antitumour and immunomodulatory activities. Plays a critical role in the antiviral host defense, predominantly in the epithelial tissues. Acts as a ligand for the heterodimeric class II cytokine receptor composed of IL10RB and IFNLR1, and receptor engagement leads to the activation of the JAK/STAT signaling pathway resulting in the expression of IFN-stimulated genes (ISG), which mediate the antiviral state. Has a restricted receptor distribution and therefore restricted targets: is primarily active in epithelial cells and this cell type-selective action is because of the epithelial cell-specific expression of its receptor IFNLR1. Seems not to be essential for early virus-activated host defense in vaginal infection, but plays an important role in Toll-like receptor (TLR)-induced antiviral defense. Plays a significant role in the antiviral immune defense in the intestinal epithelium. Exerts an immunomodulatory effect by up-regulating MHC class I antigen expression. In Mus musculus (Mouse), this protein is Interferon lambda-2 (Ifnl2).